The following is a 169-amino-acid chain: MYSMQLASCVTLTLVLLVNSAPTSSSTSSSTAEAQQQQQQQQQQQQHLEQLLMDLQELLSRMENYRNLKLPRMLTFKFYLPKQATELKDLQCLEDELGPLRHVLDLTQSKSFQLEDAENFISNIRVTVVKLKGSDNTFECQFDDESATVVDFLRRWIAFCQSIISTSPQ.

The signal sequence occupies residues 1–20 (MYSMQLASCVTLTLVLLVNS). Thr23 is a glycosylation site (O-linked (GalNAc...) threonine). A disulfide bond links Cys92 and Cys140.

Belongs to the IL-2 family. Produced by immune cells including dendritic cells. In contrast, macrophages do not produce IL2 upon bacterial stimulation.

It localises to the secreted. In terms of biological role, cytokine produced by activated CD4-positive helper T-cells and to a lesser extend activated CD8-positive T-cells and natural killer (NK) cells that plays pivotal roles in the immune response and tolerance. Binds to a receptor complex composed of either the high-affinity trimeric IL-2R (IL2RA/CD25, IL2RB/CD122 and IL2RG/CD132) or the low-affinity dimeric IL-2R (IL2RB and IL2RG). Interaction with the receptor leads to oligomerization and conformation changes in the IL-2R subunits resulting in downstream signaling starting with phosphorylation of JAK1 and JAK3. In turn, JAK1 and JAK3 phosphorylate the receptor to form a docking site leading to the phosphorylation of several substrates including STAT5. This process leads to activation of several pathways including STAT, phosphoinositide-3-kinase/PI3K and mitogen-activated protein kinase/MAPK pathways. Functions as a T-cell growth factor and can increase NK-cell cytolytic activity as well. Promotes strong proliferation of activated B-cells and subsequently immunoglobulin production. Plays a pivotal role in regulating the adaptive immune system by controlling the survival and proliferation of regulatory T-cells, which are required for the maintenance of immune tolerance. Moreover, participates in the differentiation and homeostasis of effector T-cell subsets, including Th1, Th2, Th17 as well as memory CD8-positive T-cells. This Mus musculus (Mouse) protein is Interleukin-2 (Il2).